The sequence spans 386 residues: Enoyl-[acyl-carrier-protein] reductase 2, mitochondrial (386 aa).

The transit peptide at 1–22 (MYSVLKQSIRPRLLATHNQFRT) directs the protein to the mitochondrion. Tyr79 (proton donor) is an active-site residue. Residues Asn172, 199–202 (TSAV), 222–224 (RDR), 296–299 (YGGM), 321–323 (FWV), and Lys381 each bind NADP(+).

Belongs to the zinc-containing alcohol dehydrogenase family. Quinone oxidoreductase subfamily. Homodimer and heterodimer with ETR1.

It is found in the mitochondrion. It carries out the reaction a 2,3-saturated acyl-[ACP] + NADP(+) = a (2E)-enoyl-[ACP] + NADPH + H(+). In terms of biological role, required for respiration and the maintenance of the mitochondrial compartment. Oxidoreductase with a preference for short and medium chain substrates, including trans-2-hexenoyl-CoA (C6), trans-2-decenoyl-CoA (C10), and trans-2-hexadecenoyl-CoA (C16). May play a role in mitochondrial fatty acid synthesis. The sequence is that of Enoyl-[acyl-carrier-protein] reductase 2, mitochondrial (ETR2) from Candida tropicalis (Yeast).